The following is a 179-amino-acid chain: Sec-independent protein translocase protein TatB (179 aa).

A helical transmembrane segment spans residues Met1–Gly21. The span at Gly101 to Asp115 shows a compositional bias: low complexity. Positions Gly101 to Arg134 are disordered.

It belongs to the TatB family. As to quaternary structure, the Tat system comprises two distinct complexes: a TatABC complex, containing multiple copies of TatA, TatB and TatC subunits, and a separate TatA complex, containing only TatA subunits. Substrates initially bind to the TatABC complex, which probably triggers association of the separate TatA complex to form the active translocon.

The protein localises to the cell inner membrane. Its function is as follows. Part of the twin-arginine translocation (Tat) system that transports large folded proteins containing a characteristic twin-arginine motif in their signal peptide across membranes. Together with TatC, TatB is part of a receptor directly interacting with Tat signal peptides. TatB may form an oligomeric binding site that transiently accommodates folded Tat precursor proteins before their translocation. This Burkholderia orbicola (strain AU 1054) protein is Sec-independent protein translocase protein TatB.